A 240-amino-acid polypeptide reads, in one-letter code: Citrate synthase-lysine N-methyltransferase CSKMT, mitochondrial (240 aa).

Residues 1–21 (MAALRRMLHLPRLTMGTCRPF) constitute a mitochondrion transit peptide.

It belongs to the methyltransferase superfamily.

It localises to the mitochondrion. The catalysed reaction is L-lysyl-[citrate synthase] + S-adenosyl-L-methionine = N(6)-methyl-L-lysyl-[citrate synthase] + S-adenosyl-L-homocysteine + H(+). It catalyses the reaction N(6)-methyl-L-lysyl-[citrate synthase] + S-adenosyl-L-methionine = N(6),N(6)-dimethyl-L-lysyl-[citrate synthase] + S-adenosyl-L-homocysteine + H(+). It carries out the reaction N(6),N(6)-dimethyl-L-lysyl-[citrate synthase] + S-adenosyl-L-methionine = N(6),N(6),N(6)-trimethyl-L-lysyl-[citrate synthase] + S-adenosyl-L-homocysteine + H(+). Citrate synthase-lysine methyltransferase activity is inhibited by S-adenosylhomocysteine (AdoHcy) and oxaloacetate (OAA). Protein-lysine methyltransferase that selectively trimethylates citrate synthase (CS) in mitochondria. Seems to conduct trimethylation in a highly distributive manner rather than in a processive manner, and thus introduces a single methyl group per binding event. The chain is Citrate synthase-lysine N-methyltransferase CSKMT, mitochondrial from Pongo abelii (Sumatran orangutan).